Here is a 54-residue protein sequence, read N- to C-terminus: Ovomucoid (54 aa).

The Kazal-like domain maps to V4–C54. 3 cysteine pairs are disulfide-bonded: C6–C36, C14–C33, and C22–C54. N43 carries N-linked (GlcNAc...) asparagine glycosylation.

Its subcellular location is the secreted. The polypeptide is Ovomucoid (Dendrocygna viduata (White-faced whistling-duck)).